The primary structure comprises 367 residues: Phosphoribosylaminoimidazole-succinocarboxamide synthase (367 aa).

It belongs to the SAICAR synthetase family.

It catalyses the reaction 5-amino-1-(5-phospho-D-ribosyl)imidazole-4-carboxylate + L-aspartate + ATP = (2S)-2-[5-amino-1-(5-phospho-beta-D-ribosyl)imidazole-4-carboxamido]succinate + ADP + phosphate + 2 H(+). It participates in purine metabolism; IMP biosynthesis via de novo pathway; 5-amino-1-(5-phospho-D-ribosyl)imidazole-4-carboxamide from 5-amino-1-(5-phospho-D-ribosyl)imidazole-4-carboxylate: step 1/2. This Shewanella baltica (strain OS185) protein is Phosphoribosylaminoimidazole-succinocarboxamide synthase.